The chain runs to 110 residues: uncharacterized protein (110 aa).

The segment covering 1–20 has biased composition (polar residues); sequence MNQQNQKISNPQTPVPTTSE. The tract at residues 1–24 is disordered; that stretch reads MNQQNQKISNPQTPVPTTSEMNDR.

This is an uncharacterized protein from Bacillus subtilis (strain 168).